A 338-amino-acid polypeptide reads, in one-letter code: DNA fragmentation factor subunit beta (338 aa).

The CIDE-N domain maps to Lys-4–Gly-80.

In terms of assembly, heterodimer of DFFA and DFFB. Interacts with H1-1.

It localises to the cytoplasm. The protein resides in the nucleus. Inhibited by DFFA (DFF45). Functionally, nuclease that induces DNA fragmentation and chromatin condensation during apoptosis. Degrades naked DNA and induces apoptotic morphology. The sequence is that of DNA fragmentation factor subunit beta (DFFB) from Homo sapiens (Human).